The following is a 197-amino-acid chain: uncharacterized protein (197 aa).

The next 4 helical transmembrane spans lie at 12-41 (LCIF…WVLF), 78-100 (LIQG…TALS), 120-142 (VGVF…FGCV), and 162-184 (IRFA…IFRS).

It localises to the cell membrane. This is an uncharacterized protein from Treponema pallidum (strain Nichols).